The primary structure comprises 107 residues: Iron-binding protein IscA (107 aa).

Fe cation is bound by residues Cys-35, Cys-99, and Cys-101.

It belongs to the HesB/IscA family. In terms of assembly, homodimer; may form tetramers and higher multimers. It depends on Fe cation as a cofactor.

Is able to transfer iron-sulfur clusters to apo-ferredoxin. Multiple cycles of [2Fe2S] cluster formation and transfer are observed, suggesting that IscA acts catalytically. Recruits intracellular free iron so as to provide iron for the assembly of transient iron-sulfur cluster in IscU in the presence of IscS, L-cysteine and the thioredoxin reductase system TrxA/TrxB. The sequence is that of Iron-binding protein IscA from Salmonella agona (strain SL483).